Reading from the N-terminus, the 161-residue chain is tRNA-specific adenosine deaminase (161 aa).

The CMP/dCMP-type deaminase domain occupies 2–120; that stretch reads TQDELYMKEA…GTLMNLLQEE (119 aa). His-53 contributes to the Zn(2+) binding site. Glu-55 serves as the catalytic Proton donor. Zn(2+) is bound by residues Cys-83 and Cys-86.

Belongs to the cytidine and deoxycytidylate deaminase family. As to quaternary structure, homodimer. Zn(2+) is required as a cofactor.

It carries out the reaction adenosine(34) in tRNA + H2O + H(+) = inosine(34) in tRNA + NH4(+). Its function is as follows. Catalyzes the deamination of adenosine to inosine at the wobble position 34 of tRNA(Arg2). The chain is tRNA-specific adenosine deaminase from Bacillus subtilis (strain 168).